The following is a 352-amino-acid chain: Quinolinate synthase (352 aa).

Residues His-55 and Ser-72 each contribute to the iminosuccinate site. A [4Fe-4S] cluster-binding site is contributed by Cys-117. Residues 143–145 (YVN) and Ser-160 each bind iminosuccinate. Position 204 (Cys-204) interacts with [4Fe-4S] cluster. Iminosuccinate contacts are provided by residues 230–232 (HPE) and Thr-258. Cys-303 is a binding site for [4Fe-4S] cluster.

Belongs to the quinolinate synthase family. Type 2 subfamily. Requires [4Fe-4S] cluster as cofactor.

The protein resides in the cytoplasm. It carries out the reaction iminosuccinate + dihydroxyacetone phosphate = quinolinate + phosphate + 2 H2O + H(+). Its pathway is cofactor biosynthesis; NAD(+) biosynthesis; quinolinate from iminoaspartate: step 1/1. In terms of biological role, catalyzes the condensation of iminoaspartate with dihydroxyacetone phosphate to form quinolinate. This is Quinolinate synthase from Mycobacterium leprae (strain Br4923).